A 628-amino-acid chain; its full sequence is Vacuolar-sorting receptor 4 (628 aa).

Residues 1-24 (MKQLLCYLPWLLLLSLVVSPFNEA) form the signal peptide. The Lumenal portion of the chain corresponds to 25 to 569 (RFVVEKNSLS…SKTGSQVKSA (545 aa)). Residues 56-168 (QYGGSMAGTV…GFGEKLKKAI (113 aa)) form the PA domain. Asparagine 148, asparagine 294, and asparagine 434 each carry an N-linked (GlcNAc...) asparagine glycan. EGF-like domains lie at 416–466 (ETNE…SHCE) and 469–516 (GPGR…KKCE). 7 disulfides stabilise this stretch: cysteine 420–cysteine 438, cysteine 427–cysteine 447, cysteine 449–cysteine 465, cysteine 473–cysteine 493, cysteine 480–cysteine 501, cysteine 503–cysteine 515, and cysteine 545–cysteine 558. One can recognise an EGF-like 3; calcium-binding domain in the interval 517–559 (DINECKEKKACQCPECSCKNTWGSYECSCSGDLLYMRDHDTCI). The chain crosses the membrane as a helical span at residues 570 to 590 (WAAVWLIMLSLGLAAAGAYLV). At 591 to 628 (YKYRLRQYMDSEIRAIMAQYMPLDSQPEVPNHTNDERA) the chain is on the cytoplasmic side. The Tyrosine-based internalization motif motif lies at 610 to 613 (YMPL).

Belongs to the VSR (BP-80) family. Expressed at low levels in seeds, seedlings, roots, stems, leaves, flowers and siliques.

It is found in the membrane. The protein localises to the golgi apparatus membrane. The protein resides in the cytoplasmic vesicle. It localises to the clathrin-coated vesicle membrane. Its subcellular location is the prevacuolar compartment membrane. Its function is as follows. Vacuolar-sorting receptor (VSR) involved in clathrin-coated vesicles sorting from Golgi apparatus to vacuoles. This chain is Vacuolar-sorting receptor 4 (VSR4), found in Arabidopsis thaliana (Mouse-ear cress).